The sequence spans 431 residues: Glutamate-1-semialdehyde 2,1-aminomutase (431 aa).

At K265 the chain carries N6-(pyridoxal phosphate)lysine.

This sequence belongs to the class-III pyridoxal-phosphate-dependent aminotransferase family. HemL subfamily. Homodimer. Pyridoxal 5'-phosphate serves as cofactor.

Its subcellular location is the cytoplasm. The catalysed reaction is (S)-4-amino-5-oxopentanoate = 5-aminolevulinate. The protein operates within porphyrin-containing compound metabolism; protoporphyrin-IX biosynthesis; 5-aminolevulinate from L-glutamyl-tRNA(Glu): step 2/2. In Vibrio parahaemolyticus serotype O3:K6 (strain RIMD 2210633), this protein is Glutamate-1-semialdehyde 2,1-aminomutase.